Consider the following 429-residue polypeptide: Glutamate-1-semialdehyde 2,1-aminomutase (429 aa).

K265 carries the post-translational modification N6-(pyridoxal phosphate)lysine.

This sequence belongs to the class-III pyridoxal-phosphate-dependent aminotransferase family. HemL subfamily. As to quaternary structure, homodimer. The cofactor is pyridoxal 5'-phosphate.

The protein resides in the cytoplasm. The enzyme catalyses (S)-4-amino-5-oxopentanoate = 5-aminolevulinate. It functions in the pathway porphyrin-containing compound metabolism; protoporphyrin-IX biosynthesis; 5-aminolevulinate from L-glutamyl-tRNA(Glu): step 2/2. This Shewanella pealeana (strain ATCC 700345 / ANG-SQ1) protein is Glutamate-1-semialdehyde 2,1-aminomutase.